The following is a 258-amino-acid chain: Imidazole glycerol phosphate synthase subunit HisF (258 aa).

Active-site residues include Asp12 and Asp131.

It belongs to the HisA/HisF family. Heterodimer of HisH and HisF.

It is found in the cytoplasm. It carries out the reaction 5-[(5-phospho-1-deoxy-D-ribulos-1-ylimino)methylamino]-1-(5-phospho-beta-D-ribosyl)imidazole-4-carboxamide + L-glutamine = D-erythro-1-(imidazol-4-yl)glycerol 3-phosphate + 5-amino-1-(5-phospho-beta-D-ribosyl)imidazole-4-carboxamide + L-glutamate + H(+). It participates in amino-acid biosynthesis; L-histidine biosynthesis; L-histidine from 5-phospho-alpha-D-ribose 1-diphosphate: step 5/9. In terms of biological role, IGPS catalyzes the conversion of PRFAR and glutamine to IGP, AICAR and glutamate. The HisF subunit catalyzes the cyclization activity that produces IGP and AICAR from PRFAR using the ammonia provided by the HisH subunit. This is Imidazole glycerol phosphate synthase subunit HisF from Nitrosomonas europaea (strain ATCC 19718 / CIP 103999 / KCTC 2705 / NBRC 14298).